Here is a 180-residue protein sequence, read N- to C-terminus: Large ribosomal subunit protein uL6 (180 aa).

It belongs to the universal ribosomal protein uL6 family. Part of the 50S ribosomal subunit.

In terms of biological role, this protein binds to the 23S rRNA, and is important in its secondary structure. It is located near the subunit interface in the base of the L7/L12 stalk, and near the tRNA binding site of the peptidyltransferase center. This chain is Large ribosomal subunit protein uL6, found in Mycoplasma capricolum subsp. capricolum (strain California kid / ATCC 27343 / NCTC 10154).